Reading from the N-terminus, the 267-residue chain is Ribosomal RNA small subunit methyltransferase A (267 aa).

Positions 18, 20, 45, 66, 91, and 112 each coordinate S-adenosyl-L-methionine.

Belongs to the class I-like SAM-binding methyltransferase superfamily. rRNA adenine N(6)-methyltransferase family. RsmA subfamily.

It is found in the cytoplasm. It catalyses the reaction adenosine(1518)/adenosine(1519) in 16S rRNA + 4 S-adenosyl-L-methionine = N(6)-dimethyladenosine(1518)/N(6)-dimethyladenosine(1519) in 16S rRNA + 4 S-adenosyl-L-homocysteine + 4 H(+). Specifically dimethylates two adjacent adenosines (A1518 and A1519) in the loop of a conserved hairpin near the 3'-end of 16S rRNA in the 30S particle. May play a critical role in biogenesis of 30S subunits. The protein is Ribosomal RNA small subunit methyltransferase A of Shewanella denitrificans (strain OS217 / ATCC BAA-1090 / DSM 15013).